Reading from the N-terminus, the 318-residue chain is Tyrosine--tRNA ligase (318 aa).

L-tyrosine is bound at residue tyrosine 35. The 'HIGH' region signature appears at 40–48 (PSGKVHLGH). L-tyrosine is bound by residues tyrosine 154, glutamine 158, aspartate 161, and glutamine 176. The short motif at 211–215 (KMSSS) is the 'KMSKS' region element. Serine 214 contributes to the ATP binding site.

The protein belongs to the class-I aminoacyl-tRNA synthetase family. TyrS type 3 subfamily. In terms of assembly, homodimer.

The protein resides in the cytoplasm. The catalysed reaction is tRNA(Tyr) + L-tyrosine + ATP = L-tyrosyl-tRNA(Tyr) + AMP + diphosphate + H(+). Catalyzes the attachment of tyrosine to tRNA(Tyr) in a two-step reaction: tyrosine is first activated by ATP to form Tyr-AMP and then transferred to the acceptor end of tRNA(Tyr). The chain is Tyrosine--tRNA ligase from Methanosphaera stadtmanae (strain ATCC 43021 / DSM 3091 / JCM 11832 / MCB-3).